We begin with the raw amino-acid sequence, 585 residues long: Voltage-gated potassium channel KCNC1 (585 aa).

Over 1 to 190 (MGQGDESERI…EDPYSSRYAR (190 aa)) the chain is Cytoplasmic. Residue serine 44 is modified to Phosphoserine. The Zn(2+) site is built by histidine 77, cysteine 83, cysteine 104, and cysteine 105. The interval 121-147 (SFGGAPLDNSADDADADGPGDSGDGED) is disordered. 4 positions are modified to phosphoserine: serine 130, serine 142, serine 158, and serine 160. Residues 130–147 (SADDADADGPGDSGDGED) are compositionally biased toward acidic residues. A helical transmembrane segment spans residues 191 to 209 (YVAFASLFFILVSITTFCL). N-linked (GlcNAc...) asparagine glycans are attached at residues asparagine 220 and asparagine 229. The chain crosses the membrane as a helical span at residues 248–267 (IEGVCVVWFTFEFLMRVVFC). Residues 268 to 276 (PNKVEFIKN) lie on the Cytoplasmic side of the membrane. The helical transmembrane segment at 277–295 (SLNIIDFVAILPFYLEVGL) threads the bilayer. A helical; Voltage-sensor transmembrane segment spans residues 309-331 (FLRVVRFVRILRIFKLTRHFVGL). Over 332–344 (RVLGHTLRASTNE) the chain is Cytoplasmic. The chain crosses the membrane as a helical span at residues 345–366 (FLLLIIFLALGVLIFATMIYYA). 4 residues coordinate K(+): threonine 400, leucine 401, glycine 402, and tyrosine 403. Positions 400-405 (TLGYGD) match the Selectivity filter motif. Residues 415–436 (LVGALCALAGVLTIAMPVPVIV) form a helical membrane-spanning segment. Over 437–585 (NNFGMYYSLA…YMPTEAVRVT (149 aa)) the chain is Cytoplasmic. Phosphoserine is present on serine 474. Phosphothreonine is present on threonine 483.

This sequence belongs to the potassium channel family. C (Shaw) (TC 1.A.1.2) subfamily. Kv3.1/KCNC1 sub-subfamily. As to quaternary structure, homotetramer. Homomultimer. Heteromultimer with KCNG3, KCNG4 and KCNV2. Heteromultimer with KCNC2. Heterotetramer with KCNC3. Interacts with the ancillary subunits KCNE1 and KCNE2; the interaction modulates channel activity. In terms of processing, N-glycosylated; contains sialylated glycans. As to expression, expressed in brain. Expressed in globus pallidal neurons of the basal ganglia (at protein level). Detected on Purkinje cells in the cerebellum molecular layer (at protein level).

Its subcellular location is the cell membrane. The protein localises to the cell projection. The protein resides in the axon. It localises to the presynaptic cell membrane. The enzyme catalyses K(+)(in) = K(+)(out). Voltage-gated potassium channel that opens in response to the voltage difference across the membrane and through which potassium ions pass in accordance with their electrochemical gradient. The mechanism is time-dependent and inactivation is slow. Plays an important role in the rapid repolarization of fast-firing brain neurons. Can form functional homotetrameric channels and heterotetrameric channels that contain variable proportions of KCNC2, and possibly other family members as well. Contributes to fire sustained trains of very brief action potentials at high frequency in pallidal neurons. This chain is Voltage-gated potassium channel KCNC1, found in Rattus norvegicus (Rat).